The following is a 356-amino-acid chain: MSNDIEFRKLEHLFVCNYCDVEYKKGTLLEDVELIHSGISNCDLEDIDTSINLFGKNLGAPIIVAAITGGHSKAKEINKNIAIAIDELNLGMGVGSQRAALINEELMETYSVVRDYTSSLVLGNLGAVNFIEDGWDEETIHKAVEMIDADGMAIHFNPLQEAIQPEGDYNFKGIEILKDIMENYNKTYNNKSNKKIPFIAKQVGEGFSKEDALLLNGLGFDSIDVGGSGGTSWAAVEYYRIKDEESKKFSKKYLEWGIPTAASILEVKQNFDKPIIATGGIRSGMDIAKSMAIGAQCCGVALPVLKAALRGSEDVIKLIENYIEELKTTMFLMGCDNVNELMNSRYIIKNELKEWI.

8 to 9 (RK) serves as a coordination point for substrate. FMN contacts are provided by residues 66 to 68 (AIT), Ser-96, and Asn-124. Residue 96 to 98 (SQR) coordinates substrate. Position 160 (Gln-160) interacts with substrate. Position 161 (Glu-161) interacts with Mg(2+). FMN contacts are provided by residues Lys-201, Thr-231, 280-282 (GIR), and 301-302 (AL).

It belongs to the IPP isomerase type 2 family. Homooctamer. Dimer of tetramers. FMN is required as a cofactor. It depends on NADPH as a cofactor. The cofactor is Mg(2+).

Its subcellular location is the cytoplasm. It carries out the reaction isopentenyl diphosphate = dimethylallyl diphosphate. In terms of biological role, involved in the biosynthesis of isoprenoids. Catalyzes the 1,3-allylic rearrangement of the homoallylic substrate isopentenyl (IPP) to its allylic isomer, dimethylallyl diphosphate (DMAPP). The protein is Isopentenyl-diphosphate delta-isomerase of Methanococcus aeolicus (strain ATCC BAA-1280 / DSM 17508 / OCM 812 / Nankai-3).